The chain runs to 228 residues: Urease accessory protein UreF (228 aa).

This sequence belongs to the UreF family. As to quaternary structure, ureD, UreF and UreG form a complex that acts as a GTP-hydrolysis-dependent molecular chaperone, activating the urease apoprotein by helping to assemble the nickel containing metallocenter of UreC. The UreE protein probably delivers the nickel.

The protein localises to the cytoplasm. Its function is as follows. Required for maturation of urease via the functional incorporation of the urease nickel metallocenter. The chain is Urease accessory protein UreF from Photorhabdus laumondii subsp. laumondii (strain DSM 15139 / CIP 105565 / TT01) (Photorhabdus luminescens subsp. laumondii).